Here is a 158-residue protein sequence, read N- to C-terminus: MAETVEVLVPGGKATAGPPLGPALGPLGINVKAVVDDINKKTAEFNGMQVPVTVTVDDKKNFTIEVGIPPTTALVMKEAGITKGSTEPGALVAGDLPLEAAVRIARMKFDGMLSYDLKSAVKEVLGTCVSVGVTVEGKKPREMIQAVNNGEYDGVLVA.

This sequence belongs to the universal ribosomal protein uL11 family. Part of the ribosomal stalk of the 50S ribosomal subunit. Interacts with L10 and the large rRNA to form the base of the stalk. L10 forms an elongated spine to which L12 dimers bind in a sequential fashion forming a multimeric L10(L12)X complex.

Forms part of the ribosomal stalk which helps the ribosome interact with GTP-bound translation factors. This chain is Large ribosomal subunit protein uL11, found in Methanoculleus marisnigri (strain ATCC 35101 / DSM 1498 / JR1).